The chain runs to 1003 residues: Phosphatidylinositol 4,5-bisphosphate 5-phosphatase A (1003 aa).

Disordered stretches follow at residues 1–110 (MEGQ…AAKS) and 147–414 (AMPR…QPTC). Residues 6 to 11 (RSGSAR) carry the RSXSXX motif 1 motif. Residues 11–24 (RPGTRTGLGPLPGT) show a composition bias toward low complexity. Arg-56 is subject to Asymmetric dimethylarginine; alternate. Arg-56 is subject to Omega-N-methylarginine; alternate. An Omega-N-methylarginine modification is found at Arg-65. Residue Arg-76 is modified to Asymmetric dimethylarginine. Residue Arg-83 is modified to Asymmetric dimethylarginine; alternate. At Arg-83 the chain carries Omega-N-methylarginine; alternate. Polar residues predominate over residues 160–174 (LTPTSRDQKQLSPTS). Ser-171 carries the phosphoserine modification. Positions 180–196 (ALATSGLSLALASQEQP) are enriched in low complexity. Positions 197–210 (PQSPSSPSPVPSPV) are enriched in pro residues. Basic and acidic residues predominate over residues 284–294 (ARPEAPRHSPE). 2 positions are modified to phosphoserine: Ser-292 and Ser-325. Positions 338–348 (VPPPLPKPPRS) are enriched in pro residues. The SH3-binding signature appears at 346 to 351 (PRSPSR). 2 stretches are compositionally biased toward low complexity: residues 349–361 (PSRSPSRSPNRSP) and 390–413 (QAQESPAAATTTTSPTSSWSAQPT). Residues 351–356 (RSPSRS) carry the RSXSXX motif 2 motif. Positions 422 to 725 (ITVVTWNVGT…SDHKPVAAQF (304 aa)) are catalytic. Positions 726–837 (ILQFAFRDDV…IGVTEPFQIS (112 aa)) are required for ruffle localization. The disordered stretch occupies residues 839–1003 (PTSESASSST…LGLEEGGLGP (165 aa)). Over residues 840–855 (TSESASSSTDSSGTSS) the composition is skewed to low complexity. 2 short sequence motifs (RSXSXX motif) span residues 871–876 (RSPSPG) and 882–887 (RSRSPG). Ser-900 carries the phosphoserine modification. 2 stretches are compositionally biased toward low complexity: residues 907 to 919 (SRSPSPQSRQLPR) and 927 to 943 (SSSSRGSSEEGPSGLPG). The RSXSXX motif 5 motif lies at 908 to 913 (RSPSPQ). A Phosphoserine modification is found at Ser-987.

This sequence belongs to the inositol 1,4,5-trisphosphate 5-phosphatase type II family.

The protein resides in the cytoplasm. It carries out the reaction 1D-myo-inositol 1,4,5-trisphosphate + H2O = 1D-myo-inositol 1,4-bisphosphate + phosphate. It catalyses the reaction 1D-myo-inositol 1,3,4,5-tetrakisphosphate + H2O = 1D-myo-inositol 1,3,4-trisphosphate + phosphate. The enzyme catalyses a 1,2-diacyl-sn-glycero-3-phospho-(1D-myo-inositol-4,5-bisphosphate) + H2O = a 1,2-diacyl-sn-glycero-3-phospho-(1D-myo-inositol 4-phosphate) + phosphate. In terms of biological role, inositol 5-phosphatase, which converts inositol 1,4,5-trisphosphate to inositol 1,4-bisphosphate. Also converts phosphatidylinositol 4,5-bisphosphate to phosphatidylinositol 4-phosphate and inositol 1,3,4,5-tetrakisphosphate to inositol 1,3,4-trisphosphate in vitro. May be involved in modulation of the function of inositol and phosphatidylinositol polyphosphate-binding proteins that are present at membranes ruffles. The sequence is that of Phosphatidylinositol 4,5-bisphosphate 5-phosphatase A (Inpp5j) from Mus musculus (Mouse).